The sequence spans 368 residues: Agmatine deiminase (368 aa).

The active-site Amidino-cysteine intermediate is the Cys357.

This sequence belongs to the agmatine deiminase family. In terms of assembly, homodimer.

It catalyses the reaction agmatine + H2O = N-carbamoylputrescine + NH4(+). Its pathway is amine and polyamine biosynthesis; putrescine biosynthesis via agmatine pathway; N-carbamoylputrescine from agmatine: step 1/1. Mediates the hydrolysis of agmatine into N-carbamoylputrescine in the arginine decarboxylase (ADC) pathway of putrescine biosynthesis, a basic polyamine. The sequence is that of Agmatine deiminase from Pseudomonas savastanoi pv. phaseolicola (strain 1448A / Race 6) (Pseudomonas syringae pv. phaseolicola (strain 1448A / Race 6)).